The primary structure comprises 444 residues: MRWKRMERRPPLTPLRRSRTQSSGGGLTICPRCALKLPKATRISERPWASTWQLNQHIQVSKTKKATAYLKAPREWGQCTHQDPDWSKRLGRGAFGIIVPISEDLCVKQFDSRREFFYEAIANDLMQATRERYPMHSGGSRLLGFVQPCIPCRSIVYPRMKCNLLQLDWSQVNLSVMAAEFTGLMAAVSFLNRYCGMVHCDVSPDNILATGDLTPMNPGRLVLTDFGSVALHSGSKWTNLVVTSNLGFKQHCYDFRVPPKLICKHLYKPSCVLFQCYLSSLGKMHAQVLDQPYPISPNMGLTIDMSSLGYTLLTCLELYLDLPLNNPLKFLGSATRDGRPEPMYYLGFMIPRVVMTQILSAVWTMTLDLGLDCTGKAQAIPMRQEHQLAFQKQCYLYKANQKAESLANCSDKLNCPMLKSLVRKLLERDFFNHGGHPHTRGLVF.

The segment at 1 to 25 is disordered; that stretch reads MRWKRMERRPPLTPLRRSRTQSSGG. ATP-binding positions include 90–98 and Lys108; that span reads LGRGAFGII. The active-site Proton acceptor is Asp201.

In terms of assembly, interacts with protein K-bZIP/K8. Interacts with host beta-catenin/CTNNB1. In terms of processing, AUtophosphorylated.

The protein resides in the host nucleus. It carries out the reaction L-seryl-[protein] + ATP = O-phospho-L-seryl-[protein] + ADP + H(+). The enzyme catalyses L-threonyl-[protein] + ATP = O-phospho-L-threonyl-[protein] + ADP + H(+). Its function is as follows. Serine/threonine protein kinase that plays a role in viral gene expression, viral DNA replication and encapsidation, and nuclear egress of virions. Regulates host transcriptional activity through interactions with RNA helicase and c-Jun N-terminal kinase (JNK) and viral transcriptional activity through interactions with the viral protein K-bZIP/K8. Induces host chromosome condensation and phosphorylation of histone H3. Phosphorylates the DNA polymerase processivity factor hence modulating its processivity function. Inhibits the host Wnt signaling pathway via direct interactions with beta-catenin/CTNNB1 while the kinase activity of vPK is not required for this inhibitory activity. Also phosphorylates host SAMHD1 and thereby counteracts its antiviral effect by reducing its dNTP hydrolase activity. This Human herpesvirus 8 type P (isolate GK18) (HHV-8) protein is Viral protein kinase (vPK).